We begin with the raw amino-acid sequence, 437 residues long: Nicotinate phosphoribosyltransferase (437 aa).

His231 is subject to Phosphohistidine; by autocatalysis.

It belongs to the NAPRTase family. Transiently phosphorylated on a His residue during the reaction cycle. Phosphorylation strongly increases the affinity for substrates and increases the rate of nicotinate D-ribonucleotide production. Dephosphorylation regenerates the low-affinity form of the enzyme, leading to product release.

It carries out the reaction nicotinate + 5-phospho-alpha-D-ribose 1-diphosphate + ATP + H2O = nicotinate beta-D-ribonucleotide + ADP + phosphate + diphosphate. Its pathway is cofactor biosynthesis; NAD(+) biosynthesis; nicotinate D-ribonucleotide from nicotinate: step 1/1. In terms of biological role, catalyzes the synthesis of beta-nicotinate D-ribonucleotide from nicotinate and 5-phospho-D-ribose 1-phosphate at the expense of ATP. This is Nicotinate phosphoribosyltransferase from Vibrio vulnificus (strain YJ016).